Reading from the N-terminus, the 494-residue chain is Vacuolar-processing enzyme (494 aa).

An N-terminal signal peptide occupies residues 1–20 (MTRLASGVLITLLVALAGIA). The N-linked (GlcNAc...) asparagine glycan is linked to Asn151. Residue His178 is part of the active site. Catalysis depends on Cys220, which acts as the Nucleophile. A disulfide bond links Cys253 and Cys267. An N-linked (GlcNAc...) asparagine glycan is attached at Asn336. 2 cysteine pairs are disulfide-bonded: Cys430/Cys460 and Cys442/Cys477.

The protein belongs to the peptidase C13 family. High levels are seen in the flowers, a lower level expression is seen in the leaves, while very low levels are seen in the stems and roots.

In terms of biological role, asparagine-specific endopeptidase that may be involved in processing of proteins targeted to vacuoles that accumulate during ethylene-regulated processes such as flower opening and flavedo degreening. The polypeptide is Vacuolar-processing enzyme (Citrus sinensis (Sweet orange)).